Consider the following 233-residue polypeptide: 2-amino-5-formylamino-6-ribosylaminopyrimidin-4(3H)-one 5'-monophosphate deformylase (233 aa).

Fe cation-binding residues include glutamate 33, histidine 35, aspartate 44, and histidine 114.

This sequence belongs to the creatininase superfamily. FAPy deformylase family. In terms of assembly, homodimer. It depends on Fe(2+) as a cofactor. The cofactor is Zn(2+).

The enzyme catalyses 2-amino-5-formylamino-6-(5-phospho-D-ribosylamino)pyrimidin-4(3H)-one + H2O = 2,5-diamino-6-(1-D-ribosylamino)pyrimidin-4(3H)-one 5'-phosphate + formate + H(+). It functions in the pathway cofactor biosynthesis; coenzyme F420 biosynthesis. Its pathway is cofactor biosynthesis; riboflavin biosynthesis. Catalyzes the hydrolysis of the formamide of 2-amino-5-formylamino-6-ribosylamino-4(3H)-pyrimidinone 5'-monophosphate (FAPy) to form 2,5-diamino-6-ribosylamino-4(3H)-pyrimidinone 5'-phosphate (APy). This Methanosphaera stadtmanae (strain ATCC 43021 / DSM 3091 / JCM 11832 / MCB-3) protein is 2-amino-5-formylamino-6-ribosylaminopyrimidin-4(3H)-one 5'-monophosphate deformylase.